Reading from the N-terminus, the 299-residue chain is Probable alpha-L-glutamate ligase (299 aa).

Positions 104 to 287 constitute an ATP-grasp domain; it reads LQLLAREGIE…VSGKIIEFLE (184 aa). ATP is bound by residues lysine 141, 178 to 179, aspartate 187, and 211 to 213; these read EF and RSN. 3 residues coordinate Mg(2+): aspartate 248, glutamate 260, and asparagine 262. Mn(2+)-binding residues include aspartate 248, glutamate 260, and asparagine 262.

It belongs to the RimK family. Mg(2+) serves as cofactor. Requires Mn(2+) as cofactor.

This is Probable alpha-L-glutamate ligase from Trichodesmium erythraeum (strain IMS101).